The following is a 176-amino-acid chain: Large ribosomal subunit protein uL6 (176 aa).

Basic and acidic residues predominate over residues 151–170 (RPPEPYKGKGVRYADEQVRR). The segment at 151–176 (RPPEPYKGKGVRYADEQVRRKEAKKK) is disordered.

It belongs to the universal ribosomal protein uL6 family. As to quaternary structure, part of the 50S ribosomal subunit.

Its function is as follows. This protein binds to the 23S rRNA, and is important in its secondary structure. It is located near the subunit interface in the base of the L7/L12 stalk, and near the tRNA binding site of the peptidyltransferase center. The protein is Large ribosomal subunit protein uL6 of Shewanella halifaxensis (strain HAW-EB4).